A 352-amino-acid polypeptide reads, in one-letter code: DNA polymerase IV (352 aa).

A UmuC domain is found at 7–187 (IIHIDMDCFY…LSLKKIPGIG (181 aa)). Mg(2+)-binding residues include Asp-11 and Asp-105. Residue Glu-106 is part of the active site.

It belongs to the DNA polymerase type-Y family. Monomer. Mg(2+) is required as a cofactor.

It localises to the cytoplasm. The catalysed reaction is DNA(n) + a 2'-deoxyribonucleoside 5'-triphosphate = DNA(n+1) + diphosphate. Functionally, poorly processive, error-prone DNA polymerase involved in untargeted mutagenesis. Copies undamaged DNA at stalled replication forks, which arise in vivo from mismatched or misaligned primer ends. These misaligned primers can be extended by PolIV. Exhibits no 3'-5' exonuclease (proofreading) activity. May be involved in translesional synthesis, in conjunction with the beta clamp from PolIII. This chain is DNA polymerase IV, found in Colwellia psychrerythraea (strain 34H / ATCC BAA-681) (Vibrio psychroerythus).